A 1969-amino-acid polypeptide reads, in one-letter code: Myosin-3 (1969 aa).

The region spanning 33–82 (DSKKNCWIPDPEDGFVAAEIQSTTGDQVTVVTVKGNQITVKKDQCQEMNP) is the Myosin N-terminal SH3-like domain. The region spanning 86–791 (DKTEDMANLT…VLAKLEDLRD (706 aa)) is the Myosin motor domain. Lys-130 is subject to N6,N6,N6-trimethyllysine. 179 to 186 (GESGAGKT) lines the ATP pocket. Actin-binding regions lie at residues 667 to 689 (LNNL…IPNE) and 770 to 784 (KIGE…GVLA). The region spanning 794 to 823 (LSRIVTMFQSRIRSYLAKAEVRRRYEQQTG) is the IQ domain. A coiled-coil region spans residues 853–1941 (LKAGKEQEAM…KMRNKIRASA (1089 aa)). 3 disordered regions span residues 943 to 967 (QERH…KKHV), 993 to 1029 (DEMA…EEDK), and 1134 to 1153 (ELES…NELQ). Composition is skewed to basic and acidic residues over residues 1001–1029 (SVAK…EEDK) and 1137–1153 (SERN…NELQ).

The protein belongs to the TRAFAC class myosin-kinesin ATPase superfamily. Myosin family. As to quaternary structure, muscle myosin is a hexameric protein that consists of 2 heavy chain subunits (MHC), 2 alkali light chain subunits (MLC) and 2 regulatory light chain subunits (MLC-2).

Its subcellular location is the cytoplasm. It is found in the myofibril. It localises to the sarcomere. The protein localises to the a band. Essential for muscle contraction. Involved in ovulation likely by regulating the contraction of gonadal myoepithelial sheath cells. The chain is Myosin-3 from Caenorhabditis briggsae.